A 906-amino-acid polypeptide reads, in one-letter code: Catenin alpha-2 (906 aa).

Basic and acidic residues predominate over residues 866–880 (KKPLVKREKPEEYQT). The interval 866-892 (KKPLVKREKPEEYQTRVRRGSQKKHIS) is disordered. Over residues 881–891 (RVRRGSQKKHI) the composition is skewed to basic residues.

It belongs to the vinculin/alpha-catenin family. Interacts with CDH1 and CDH2. In terms of tissue distribution, mainly in the nervous system (at protein level).

Its subcellular location is the cell membrane. The protein localises to the cytoplasm. The protein resides in the cytoskeleton. It localises to the cell junction. It is found in the adherens junction. Its subcellular location is the cell projection. The protein localises to the axon. The protein resides in the nucleus. May function as a linker between cadherin adhesion receptors and the cytoskeleton to regulate cell-cell adhesion and differentiation in the nervous system. The chain is Catenin alpha-2 (CTNNA2) from Gallus gallus (Chicken).